The primary structure comprises 713 residues: Metal transporter CNNM3 (713 aa).

Residues 7–29 traverse the membrane as a helical segment; sequence AVVGWLGWVLAAFCLGSTAGEAA. Asn-73 carries N-linked (GlcNAc...) asparagine glycosylation. One can recognise a CNNM transmembrane domain in the interval 136–314; the sequence is EAAPPWALGL…DPYSDLSKGV (179 aa). The next 4 helical transmembrane spans lie at 137–157, 199–219, 227–247, and 267–287; these read AAPP…AAVA, CALG…AVLL, AVPA…VLPA, and LAVL…ELAA. CBS domains lie at 324–385 and 392–458; these read LTPL…CTPL and YNHP…ILDE. Positions 664 to 713 are disordered; sequence LPPSPENAELQAIPGSQTRLLGDKSRETAGSTNSRPSIPVEESPGRNPGV. 2 positions are modified to phosphoserine: Ser-667 and Ser-706.

It belongs to the ACDP family. Widely expressed with highest levels in brain, kidney, liver, lung and heart.

The protein resides in the cell membrane. In terms of biological role, probable metal transporter. The protein is Metal transporter CNNM3 (Cnnm3) of Mus musculus (Mouse).